Here is a 340-residue protein sequence, read N- to C-terminus: N-acetyl-gamma-glutamyl-phosphate reductase (340 aa).

Cysteine 146 is a catalytic residue.

It belongs to the NAGSA dehydrogenase family. Type 1 subfamily.

The protein localises to the cytoplasm. It catalyses the reaction N-acetyl-L-glutamate 5-semialdehyde + phosphate + NADP(+) = N-acetyl-L-glutamyl 5-phosphate + NADPH + H(+). Its pathway is amino-acid biosynthesis; L-arginine biosynthesis; N(2)-acetyl-L-ornithine from L-glutamate: step 3/4. Catalyzes the NADPH-dependent reduction of N-acetyl-5-glutamyl phosphate to yield N-acetyl-L-glutamate 5-semialdehyde. The chain is N-acetyl-gamma-glutamyl-phosphate reductase from Streptococcus thermophilus (strain ATCC BAA-491 / LMD-9).